The chain runs to 873 residues: Actin-related protein 8 (873 aa).

Residues 108–129 (DEQVKPTSSTSSTSTTEEVEIK) are disordered. Low complexity predominate over residues 114 to 123 (TSSTSSTSTT). 368–371 (DLGH) lines the ATP pocket. Over residues 596–650 (NNNNNNNNSSSSSNNNNNNNNSGSNSNINSYNNNNNNNNNNNNNNNNNNNNSFNN) the composition is skewed to low complexity. A disordered region spans residues 596–701 (NNNNNNNNSS…TSSPTKKLKI (106 aa)). Polar residues predominate over residues 651 to 668 (VTIVTSTLNSNSTVPSTL). Low complexity predominate over residues 669 to 696 (NSNSTVPSISNSNSTVPSTSTSTTSSPT). Residues 762 to 804 (FKQLEQQYQAQQLQFQQQLQQQQQQQQQLQQQLQNSTNSATTT) are a coiled coil.

This sequence belongs to the actin family. ARP8 subfamily. In terms of assembly, component of the chromatin remodeling INO80 complex. Exists as monomers and dimers, but the dimer is most probably the biologically relevant form required for stable interactions with histones that exploits the twofold symmetry of the nucleosome core.

It is found in the nucleus. Its subcellular location is the cytoplasm. The protein resides in the cytoskeleton. In terms of biological role, plays an important role in the functional organization of mitotic chromosomes. Exhibits low basal ATPase activity, and unable to polymerize. Its function is as follows. Proposed core component of the chromatin remodeling INO80 complex which is involved in transcriptional regulation, DNA replication and probably DNA repair. Strongly prefer nucleosomes and H3-H4 tetramers over H2A-H2B dimers, suggesting it may act as a nucleosome recognition module within the complex. The chain is Actin-related protein 8 from Dictyostelium discoideum (Social amoeba).